A 196-amino-acid chain; its full sequence is Heat shock protein beta-8 (196 aa).

Positions 1–28 (MADGQLPFPCSYPSRLRRDPFRDSPLSS) are disordered. Phosphoserine occurs at positions 24 and 57. Threonine 63 carries the phosphothreonine modification. Residues arginine 71 and arginine 78 each carry the asymmetric dimethylarginine modification. The 108-residue stretch at 78–185 (RFGVPAEGRS…PFGESSFNNE (108 aa)) folds into the sHSP domain. At serine 87 the chain carries Phosphoserine. Positions 176-196 (PFGESSFNNELPQDNQEVTCS) are disordered. Residues 178 to 196 (GESSFNNELPQDNQEVTCS) are compositionally biased toward polar residues.

This sequence belongs to the small heat shock protein (HSP20) family. In terms of assembly, monomer. Forms a ternary complex with BAG3 and HSPA1A. Component of the chaperone-assisted selective autophagy (CASA) complex consisting of BAG3, HSPA8/HSC70, HSPB8 and STUB1/CHIP. Interacts with HSPB1. Interacts with DNAJB6. Interacts with BAG3. Highly expressed in skeletal muscle, heart, uterus, liver, lung and ovary. Low levels found in stomach and brain. Not detected in small intestine, large intestine, kidney, spleen and testis. In the ovary, expression is concentrated in the endometrium and in the connective tissue between the circular and longitudinal muscles of the myometrium.

The protein resides in the cytoplasm. It localises to the nucleus. Its function is as follows. Involved in the chaperone-assisted selective autophagy (CASA), a crucial process for protein quality control, particularly in mechanical strained cells and tissues such as muscle. Displays temperature-dependent chaperone activity. The polypeptide is Heat shock protein beta-8 (Hspb8) (Mus musculus (Mouse)).